A 757-amino-acid chain; its full sequence is GTPase-activating protein GYP7 (757 aa).

The Rab-GAP TBC domain occupies 395-640 (GLEDCIRGEA…SLWEILWTDY (246 aa)). Residues 482–507 (GVGSDRLPTTRESSPETPDEADDDEF) form a disordered region. The segment covering 498–507 (TPDEADDDEF) has biased composition (acidic residues).

In terms of biological role, most effectively accelerate the intrinsic GTPase activity of YPT7. It is also active, but to a lesser extent, on YPT31, YPT32 and YPT1. YPT6 and SEC4. The sequence is that of GTPase-activating protein GYP7 (GYP7) from Debaryomyces hansenii (strain ATCC 36239 / CBS 767 / BCRC 21394 / JCM 1990 / NBRC 0083 / IGC 2968) (Yeast).